A 560-amino-acid polypeptide reads, in one-letter code: Nucleoprotein (560 aa).

The binding site for the cap structure m7GTP stretch occupies residues Met-53–Val-236. Positions Leu-333–Ser-353 are disordered. Residues Asp-379 and Glu-381 each contribute to the Mn(2+) site. Zn(2+) is bound by residues Glu-389, Cys-496, His-499, and Cys-520. Residue Asp-524 coordinates Mn(2+).

It belongs to the arenaviridae nucleocapsid protein family. Homomultimerizes to form the nucleocapsid. Binds to viral genomic RNA. Interacts with glycoprotein G2. Interacts with protein Z; this interaction probably directs the encapsidated genome to budding sites. Interacts with protein L; this interaction does not interfere with Z-L interaction. Interacts with host IKBKE (via Protein kinase domain); the interaction inhibits IKBKE kinase activity.

The protein resides in the virion. The protein localises to the host cytoplasm. In terms of biological role, encapsidates the genome, protecting it from nucleases. The encapsidated genomic RNA is termed the nucleocapsid (NC). Serves as template for viral transcription and replication. The increased presence of protein N in host cell does not seem to trigger the switch from transcription to replication as observed in other negative strain RNA viruses. Through the interaction with host IKBKE, strongly inhibits the phosphorylation and nuclear translocation of host IRF3, a protein involved in interferon activation pathway, leading to the inhibition of interferon-beta and IRF3-dependent promoters activation. Also encodes a functional 3'-5' exoribonuclease that degrades preferentially dsRNA substrates and thereby participates in the suppression of interferon induction. The chain is Nucleoprotein from Pirital mammarenavirus (isolate Rat/Venezuela/VAV-488/1995) (PIRV).